Consider the following 336-residue polypeptide: Dihydroorotate dehydrogenase (quinone) (336 aa).

Residues 62–66 (AGLDK) and Thr-86 each bind FMN. Lys-66 lines the substrate pocket. Residue 111-115 (NRMGF) coordinates substrate. Positions 139 and 172 each coordinate FMN. Position 172 (Asn-172) interacts with substrate. Catalysis depends on Ser-175, which acts as the Nucleophile. Position 177 (Asn-177) interacts with substrate. FMN is bound by residues Lys-217 and Thr-245. Residue 246–247 (NT) participates in substrate binding. FMN-binding positions include Gly-268, Gly-297, and 318-319 (YS).

Belongs to the dihydroorotate dehydrogenase family. Type 2 subfamily. As to quaternary structure, monomer. The cofactor is FMN.

The protein resides in the cell membrane. It catalyses the reaction (S)-dihydroorotate + a quinone = orotate + a quinol. The protein operates within pyrimidine metabolism; UMP biosynthesis via de novo pathway; orotate from (S)-dihydroorotate (quinone route): step 1/1. Catalyzes the conversion of dihydroorotate to orotate with quinone as electron acceptor. The chain is Dihydroorotate dehydrogenase (quinone) from Vibrio atlanticus (strain LGP32) (Vibrio splendidus (strain Mel32)).